A 632-amino-acid polypeptide reads, in one-letter code: 1-deoxy-D-xylulose-5-phosphate synthase (632 aa).

Thiamine diphosphate contacts are provided by residues H77 and 118–120; that span reads GHA. Mg(2+) is bound at residue D149. Thiamine diphosphate contacts are provided by residues 150 to 151, N178, F287, and E372; that span reads GS. Position 178 (N178) interacts with Mg(2+).

Belongs to the transketolase family. DXPS subfamily. Homodimer. It depends on Mg(2+) as a cofactor. Requires thiamine diphosphate as cofactor.

The enzyme catalyses D-glyceraldehyde 3-phosphate + pyruvate + H(+) = 1-deoxy-D-xylulose 5-phosphate + CO2. It functions in the pathway metabolic intermediate biosynthesis; 1-deoxy-D-xylulose 5-phosphate biosynthesis; 1-deoxy-D-xylulose 5-phosphate from D-glyceraldehyde 3-phosphate and pyruvate: step 1/1. Functionally, catalyzes the acyloin condensation reaction between C atoms 2 and 3 of pyruvate and glyceraldehyde 3-phosphate to yield 1-deoxy-D-xylulose-5-phosphate (DXP). This chain is 1-deoxy-D-xylulose-5-phosphate synthase, found in Chlorobium luteolum (strain DSM 273 / BCRC 81028 / 2530) (Pelodictyon luteolum).